Reading from the N-terminus, the 185-residue chain is Elongation factor P (185 aa).

Belongs to the elongation factor P family.

It localises to the cytoplasm. Its pathway is protein biosynthesis; polypeptide chain elongation. In terms of biological role, involved in peptide bond synthesis. Stimulates efficient translation and peptide-bond synthesis on native or reconstituted 70S ribosomes in vitro. Probably functions indirectly by altering the affinity of the ribosome for aminoacyl-tRNA, thus increasing their reactivity as acceptors for peptidyl transferase. This is Elongation factor P from Bacillus pumilus (strain SAFR-032).